A 378-amino-acid chain; its full sequence is Cytochrome b (378 aa).

4 consecutive transmembrane segments (helical) span residues 34–54 (FGSL…FLAM), 78–99 (WLLR…YLHV), 114–134 (WLIG…GYVL), and 179–199 (FFTF…IHLL). Positions 84 and 98 each coordinate heme b. 2 residues coordinate heme b: His183 and His197. Position 202 (His202) interacts with a ubiquinone. The next 4 membrane-spanning stretches (helical) occupy residues 227 to 247 (FKDI…VLIS), 289 to 309 (LGGV…PFYN), 321 to 341 (INQV…WIGA), and 348 to 368 (YVLI…VNPL).

Belongs to the cytochrome b family. As to quaternary structure, the main subunits of complex b-c1 are: cytochrome b, cytochrome c1 and the Rieske protein. It depends on heme b as a cofactor.

It localises to the mitochondrion inner membrane. In terms of biological role, component of the ubiquinol-cytochrome c reductase complex (complex III or cytochrome b-c1 complex) that is part of the mitochondrial respiratory chain. The b-c1 complex mediates electron transfer from ubiquinol to cytochrome c. Contributes to the generation of a proton gradient across the mitochondrial membrane that is then used for ATP synthesis. In Drosophila sechellia (Fruit fly), this protein is Cytochrome b (mt:Cyt-b).